Here is a 276-residue protein sequence, read N- to C-terminus: NADPH-dependent 7-cyano-7-deazaguanine reductase (276 aa).

Substrate is bound at residue Ile-83–Ser-85. An NADPH-binding site is contributed by Ser-85–Lys-86. The Thioimide intermediate role is filled by Cys-184. The active-site Proton donor is Asp-191. Position 223–224 (His-223–Glu-224) interacts with substrate. Residue Arg-252–Gly-253 coordinates NADPH.

Belongs to the GTP cyclohydrolase I family. QueF type 2 subfamily. Homodimer.

Its subcellular location is the cytoplasm. The enzyme catalyses 7-aminomethyl-7-carbaguanine + 2 NADP(+) = 7-cyano-7-deazaguanine + 2 NADPH + 3 H(+). Its pathway is tRNA modification; tRNA-queuosine biosynthesis. In terms of biological role, catalyzes the NADPH-dependent reduction of 7-cyano-7-deazaguanine (preQ0) to 7-aminomethyl-7-deazaguanine (preQ1). This chain is NADPH-dependent 7-cyano-7-deazaguanine reductase, found in Pseudomonas putida (strain ATCC 47054 / DSM 6125 / CFBP 8728 / NCIMB 11950 / KT2440).